Consider the following 440-residue polypeptide: Serine/threonine-protein kinase VRK1 (440 aa).

Residues 37–317 (WKLGLPIGQG…LLEYTEKPLY (281 aa)) enclose the Protein kinase domain. Residues 43–51 (IGQGGFGCI) and K71 each bind ATP. K71 is covalently cross-linked (Glycyl lysine isopeptide (Lys-Gly) (interchain with G-Cter in SUMO2)). D177 serves as the catalytic Proton acceptor. The residue at position 342 (S342) is a Phosphoserine; by PLK3. S376 carries the post-translational modification Phosphoserine. A Phosphothreonine modification is found at T378. Polar residues-rich tracts occupy residues 379-391 (QVQE…SVES) and 398-410 (SMSQ…SSSD). The segment at 379-440 (QVQEAAQTRS…GSRTRKKAQK (62 aa)) is disordered. The interval 387 to 393 (RSVESQG) is required for interaction with the nucleosome.

Belongs to the protein kinase superfamily. CK1 Ser/Thr protein kinase family. VRK subfamily. Interacts with HDAC1, KAT2B, SETDB1, KDM3A and KDM4A. Associates with the nucleosome through interactions with nucleosome DNA, histone H2A and histone H2B; the interaction with H2A and H2B is mediated by the nucleosome acidic patch, a cluster of negatively charged residues of H2A and H2B forming a cleft within the nucleosome core. Autophosphorylated at various serine and threonine residues. Autophosphorylation does not impair its ability to phosphorylate p53/TP53. Phosphorylation by PLK3 leads to induction of Golgi fragmentation during mitosis. Highly expressed in testis. Expressed in liver, kidney and muscle. Weakly expressed in thymus, bone marrow and spleen.

The protein resides in the nucleus. Its subcellular location is the cytoplasm. The protein localises to the cajal body. The enzyme catalyses L-seryl-[protein] + ATP = O-phospho-L-seryl-[protein] + ADP + H(+). It catalyses the reaction L-threonyl-[protein] + ATP = O-phospho-L-threonyl-[protein] + ADP + H(+). Active in presence of Mn(2+), Mg(2+) and Zn(2+), but is not functional with Ca(2+) or Cu(2+). Has a higher affinity for Mn(2+) than for Mg(2+). RAN inhibits its autophosphorylation and its ability to phosphorylate histone H3. Serine/threonine kinase involved in the regulation of key cellular processes including the cell cycle, nuclear condensation, transcription regulation, and DNA damage response. Controls chromatin organization and remodeling by mediating phosphorylation of histone H3 on 'Thr-4' and histone H2AX (H2aXT4ph). It also phosphorylates KAT5 in response to DNA damage, promoting KAT5 association with chromatin and histone acetyltransferase activity. Is involved in the regulation of cell cycle progression of neural progenitors, and is required for proper cortical neuronal migration. Is involved in neurite elongation and branching in motor neurons, and has an essential role in Cajal bodies assembly, acting through COIL phosphorylation and the control of coilin degradation. Involved in Golgi disassembly during the cell cycle: following phosphorylation by PLK3 during mitosis, required to induce Golgi fragmentation. Phosphorylates BANF1: disrupts its ability to bind DNA, reduces its binding to LEM domain-containing proteins and causes its relocalization from the nucleus to the cytoplasm. Phosphorylates TP53BP1 and p53/TP53 on 'Thr-18', preventing the interaction between p53/TP53 and MDM2. Phosphorylates ATF2 which activates its transcriptional activity. Phosphorylates JUN. This chain is Serine/threonine-protein kinase VRK1, found in Mus musculus (Mouse).